The sequence spans 62 residues: Ferredoxin-3 (62 aa).

4Fe-4S ferredoxin-type domains lie at 2 to 28 (SLKI…SAGS) and 29 to 62 (DIYV…IVKA). Residues cysteine 9, cysteine 12, cysteine 15, cysteine 19, cysteine 38, cysteine 41, cysteine 50, and cysteine 54 each contribute to the [4Fe-4S] cluster site.

Requires [4Fe-4S] cluster as cofactor.

In terms of biological role, ferredoxins are iron-sulfur proteins that transfer electrons in a wide variety of metabolic reactions. In Chlorobaculum tepidum (strain ATCC 49652 / DSM 12025 / NBRC 103806 / TLS) (Chlorobium tepidum), this protein is Ferredoxin-3.